The primary structure comprises 352 residues: 4-hydroxy-2-oxovalerate aldolase (352 aa).

One can recognise a Pyruvate carboxyltransferase domain in the interval 14 to 266 (VRMTDTSLRD…KTGIDFFDIA (253 aa)). 22-23 (RD) provides a ligand contact to substrate. Aspartate 23 is a Mn(2+) binding site. The active-site Proton acceptor is histidine 26. Residues serine 176 and histidine 205 each contribute to the substrate site. Residues histidine 205 and histidine 207 each contribute to the Mn(2+) site. Position 296 (tyrosine 296) interacts with substrate.

It belongs to the 4-hydroxy-2-oxovalerate aldolase family.

It catalyses the reaction (S)-4-hydroxy-2-oxopentanoate = acetaldehyde + pyruvate. This chain is 4-hydroxy-2-oxovalerate aldolase, found in Mycolicibacterium gilvum (strain PYR-GCK) (Mycobacterium gilvum (strain PYR-GCK)).